A 515-amino-acid polypeptide reads, in one-letter code: Bifunctional purine biosynthesis protein PurH (515 aa).

Residues Met1–Val145 form the MGS-like domain.

It belongs to the PurH family.

It carries out the reaction (6R)-10-formyltetrahydrofolate + 5-amino-1-(5-phospho-beta-D-ribosyl)imidazole-4-carboxamide = 5-formamido-1-(5-phospho-D-ribosyl)imidazole-4-carboxamide + (6S)-5,6,7,8-tetrahydrofolate. The catalysed reaction is IMP + H2O = 5-formamido-1-(5-phospho-D-ribosyl)imidazole-4-carboxamide. It functions in the pathway purine metabolism; IMP biosynthesis via de novo pathway; 5-formamido-1-(5-phospho-D-ribosyl)imidazole-4-carboxamide from 5-amino-1-(5-phospho-D-ribosyl)imidazole-4-carboxamide (10-formyl THF route): step 1/1. The protein operates within purine metabolism; IMP biosynthesis via de novo pathway; IMP from 5-formamido-1-(5-phospho-D-ribosyl)imidazole-4-carboxamide: step 1/1. This Streptococcus pyogenes serotype M12 (strain MGAS2096) protein is Bifunctional purine biosynthesis protein PurH.